A 474-amino-acid polypeptide reads, in one-letter code: Chromosomal replication initiator protein DnaA (474 aa).

The domain I, interacts with DnaA modulators stretch occupies residues 1-90; that stretch reads MSSSLWLQCL…RQVVVPSSQI (90 aa). The interval 91-137 is domain II; it reads IAPAAPAVTLAPRPLPATRILQDDAPSRSWEPAPSPVQPESKSGYRS. A disordered region spans residues 112–137; it reads QDDAPSRSWEPAPSPVQPESKSGYRS. Residues 128–137 are compositionally biased toward polar residues; it reads QPESKSGYRS. Positions 138–354 are domain III, AAA+ region; that stretch reads NVNPKHNFNN…GALNRVIANA (217 aa). Residues Gly-182, Gly-184, Lys-185, and Thr-186 each coordinate ATP. Residues 355 to 474 form a domain IV, binds dsDNA region; that stretch reads NFTGRAITID…YSNLIRTLST (120 aa).

This sequence belongs to the DnaA family. In terms of assembly, oligomerizes as a right-handed, spiral filament on DNA at oriC.

It is found in the cytoplasm. Its function is as follows. Plays an essential role in the initiation and regulation of chromosomal replication. ATP-DnaA binds to the origin of replication (oriC) to initiate formation of the DNA replication initiation complex once per cell cycle. Binds the DnaA box (a 9 base pair repeat at the origin) and separates the double-stranded (ds)DNA. Forms a right-handed helical filament on oriC DNA; dsDNA binds to the exterior of the filament while single-stranded (ss)DNA is stabiized in the filament's interior. The ATP-DnaA-oriC complex binds and stabilizes one strand of the AT-rich DNA unwinding element (DUE), permitting loading of DNA polymerase. After initiation quickly degrades to an ADP-DnaA complex that is not apt for DNA replication. Binds acidic phospholipids. This chain is Chromosomal replication initiator protein DnaA, found in Photobacterium profundum (strain SS9).